Consider the following 406-residue polypeptide: Tryptophan synthase beta chain (406 aa).

An N6-(pyridoxal phosphate)lysine modification is found at K99.

Belongs to the TrpB family. Tetramer of two alpha and two beta chains. Pyridoxal 5'-phosphate serves as cofactor.

It catalyses the reaction (1S,2R)-1-C-(indol-3-yl)glycerol 3-phosphate + L-serine = D-glyceraldehyde 3-phosphate + L-tryptophan + H2O. Its pathway is amino-acid biosynthesis; L-tryptophan biosynthesis; L-tryptophan from chorismate: step 5/5. In terms of biological role, the beta subunit is responsible for the synthesis of L-tryptophan from indole and L-serine. The sequence is that of Tryptophan synthase beta chain from Brucella abortus (strain 2308).